Consider the following 562-residue polypeptide: Non-homologous end joining factor IFFO1 (562 aa).

The segment at 65-116 (ALRNDLGSNINVLKTLNLRFRCFLAKVHELERRNRLLEKQLQQALEEGKQGR) is LMNA binding. Residues 73-529 (NINVLKTLNL…RLITQSGDRK (457 aa)) enclose the IF rod domain. A coiled-coil region spans residues 85-117 (RCFLAKVHELERRNRLLEKQLQQALEEGKQGRR). The disordered stretch occupies residues 154-187 (RVLGSPSRSPAGPLASSAACHTSSSTSTSTAFSS). Positions 168 to 187 (ASSAACHTSSSTSTSTAFSS) are enriched in low complexity. A coiled-coil region spans residues 237–301 (EIRALYNVLA…MKVEQLKAEL (65 aa)). The disordered stretch occupies residues 364–401 (MGGRKRERKAAVEEDTSLSESDGPRQPEGAEEESTALS). The interval 453–528 (EQEDSLEKVI…RRLITQSGDR (76 aa)) is XCCR4 binding. Required for localization to the double-strand breaks (DSBs). Residues 458-504 (LEKVIKDTESLFKTREKEYQETIDQIELELATAKNDMNRHLHEYMEM) are a coiled coil. Residues 523–562 (TQSGDRKSPAFTAVPLSDPPPPPSETEDSDRDVSSDSSMR) are disordered. Residues 553-562 (RDVSSDSSMR) are compositionally biased toward basic and acidic residues.

The protein belongs to the intermediate filament family. In terms of assembly, forms a heterotetramer with XRCC4. The interaction with XRCC4 is direct, involves LIG4-free XRCC4 and leads to relocalization of IFFO1 at the double-strand break (DSB) sites. Interacts with LMNA; the interaction forms an interior nucleoskeleton and the recruitment to DNA double-strand breaks.

It is found in the nucleus. It localises to the nucleoplasm. Its subcellular location is the nucleus inner membrane. The protein localises to the nucleus matrix. Functionally, nuclear matrix protein involved in the immobilization of broken DNA ends and the suppression of chromosome translocation during DNA double-strand breaks (DSBs). Interacts with the nuclear lamina component LMNA, resulting in the formation of a nucleoskeleton that will relocalize to the DSB sites in a XRCC4-dependent manner and promote the immobilization of the broken ends, thereby preventing chromosome translocation. Acts as a scaffold that allows the DNA repair protein XRCC4 and LMNA to assemble into a complex at the DSB sites. This chain is Non-homologous end joining factor IFFO1, found in Mus musculus (Mouse).